Reading from the N-terminus, the 353-residue chain is S-adenosylmethionine:tRNA ribosyltransferase-isomerase (353 aa).

It belongs to the QueA family. In terms of assembly, monomer.

It localises to the cytoplasm. The enzyme catalyses 7-aminomethyl-7-carbaguanosine(34) in tRNA + S-adenosyl-L-methionine = epoxyqueuosine(34) in tRNA + adenine + L-methionine + 2 H(+). The protein operates within tRNA modification; tRNA-queuosine biosynthesis. Its function is as follows. Transfers and isomerizes the ribose moiety from AdoMet to the 7-aminomethyl group of 7-deazaguanine (preQ1-tRNA) to give epoxyqueuosine (oQ-tRNA). This is S-adenosylmethionine:tRNA ribosyltransferase-isomerase from Sodalis glossinidius (strain morsitans).